A 1015-amino-acid chain; its full sequence is Probable beta-galactosidase B (1015 aa).

Positions 1 to 21 (MAHIYRLLLLLLSNLWFSAAA) are cleaved as a signal peptide. N-linked (GlcNAc...) asparagine glycosylation occurs at asparagine 23. Substrate is bound at residue tyrosine 90. Asparagine 100 carries an N-linked (GlcNAc...) asparagine glycan. Asparagine 135, alanine 136, and glutamate 137 together coordinate substrate. An N-linked (GlcNAc...) asparagine glycan is attached at asparagine 172. Asparagine 195 contacts substrate. The Proton donor role is filled by glutamate 196. A glycan (N-linked (GlcNAc...) asparagine) is linked at asparagine 211. Residue tyrosine 265 coordinates substrate. A disulfide bridge links cysteine 271 with cysteine 324. Glutamate 308 acts as the Nucleophile in catalysis. Tyrosine 373 lines the substrate pocket. N-linked (GlcNAc...) asparagine glycosylation is found at asparagine 411, asparagine 441, asparagine 456, asparagine 554, asparagine 679, asparagine 735, asparagine 775, asparagine 821, and asparagine 878.

It belongs to the glycosyl hydrolase 35 family.

It localises to the secreted. The catalysed reaction is Hydrolysis of terminal non-reducing beta-D-galactose residues in beta-D-galactosides.. Its function is as follows. Cleaves beta-linked terminal galactosyl residues from gangliosides, glycoproteins, and glycosaminoglycans. The chain is Probable beta-galactosidase B (lacB) from Neosartorya fischeri (strain ATCC 1020 / DSM 3700 / CBS 544.65 / FGSC A1164 / JCM 1740 / NRRL 181 / WB 181) (Aspergillus fischerianus).